Here is a 395-residue protein sequence, read N- to C-terminus: MGIKHLYQIISENAPDAVKSGEIKNQFGRKVAIDASMSIYSFLIAVRSDGQQLMNESGETTSHLMGLFYRTLRMVDNGIKPLYVFDGAPPKLKSGELAKRIARKQEAAEQHEEAKETGTTEDVEKFSRRTVRVTREHNEECKKLLKLMGIPYINAPTEAEAQCAVLARAGKVYAAASEDMDTLCFDSPILLRHLTFSEQRKEPILEIHLDRVLEGLGMDRKTFVDLCILLGCDYLDPIPKVGPNTALKLIRDHGSLEKVVEAMKNDPKQKYTIPDDWPYEQARDLFFEPDVRPADHPECDFKWEAPDVEGLVKFLVEGKGFSEDRVRSGAARLQKNMKTAQQSRLEGFFKPVAKTDEEKASLKRKHEEKLEAAKKKKKEDAKAKREAKSRPKGTA.

An N-domain region spans residues Met-1 to Lys-104. Asp-34 contacts Mg(2+). DNA-binding residues include Arg-47 and Arg-70. Asp-86 provides a ligand contact to Mg(2+). The segment at Arg-103 to Val-123 is disordered. An I-domain region spans residues Asp-122–His-253. Glu-158, Glu-160, Asp-179, and Asp-181 together coordinate Mg(2+). Position 158 (Glu-158) interacts with DNA. Residues Gly-231 and Asp-233 each contribute to the DNA site. Asp-233 serves as a coordination point for Mg(2+). Residues Gln-341–Phe-349 form an interaction with PCNA region. A compositionally biased stretch (basic and acidic residues) spans Asp-356 to Ser-389. A disordered region spans residues Asp-356–Ala-395.

The protein belongs to the XPG/RAD2 endonuclease family. FEN1 subfamily. Interacts with PCNA. Three molecules of FEN1 bind to one PCNA trimer with each molecule binding to one PCNA monomer. PCNA stimulates the nuclease activity without altering cleavage specificity. Mg(2+) is required as a cofactor. In terms of processing, phosphorylated. Phosphorylation upon DNA damage induces relocalization to the nuclear plasma.

The protein localises to the nucleus. It localises to the nucleolus. It is found in the nucleoplasm. The protein resides in the mitochondrion. In terms of biological role, structure-specific nuclease with 5'-flap endonuclease and 5'-3' exonuclease activities involved in DNA replication and repair. During DNA replication, cleaves the 5'-overhanging flap structure that is generated by displacement synthesis when DNA polymerase encounters the 5'-end of a downstream Okazaki fragment. It enters the flap from the 5'-end and then tracks to cleave the flap base, leaving a nick for ligation. Also involved in the long patch base excision repair (LP-BER) pathway, by cleaving within the apurinic/apyrimidinic (AP) site-terminated flap. Acts as a genome stabilization factor that prevents flaps from equilibrating into structures that lead to duplications and deletions. Also possesses 5'-3' exonuclease activity on nicked or gapped double-stranded DNA, and exhibits RNase H activity. Also involved in replication and repair of rDNA and in repairing mitochondrial DNA. The polypeptide is Flap endonuclease 1 (Uncinocarpus reesii (strain UAMH 1704)).